We begin with the raw amino-acid sequence, 450 residues long: MNVKKVLLGLFLVGVLGIAVVASGCIGGQQTSTVTSTPTETSLQGKIVFAVGGAPNEIEYWKGVIAEFEKKYPGVTVELKRQATDTEQRRLDLVNALRGKSSDPDVFLMDVAWLGQFIASGWLEPLDDYVQKDNYDLSVFFQSVINLADKQGGKLYALPVYIDAGLLYYRKDLLEKYGYSKPPETWQELVEMAQKIQSGERETNPNFWGFVWQGKQYESLVCDFVEYVYSNGGSLGEFKDGKWVPTLNKPENVEALQFMVDLIHKYKISPPNTYTEMTEEPVRLMFQQGNAAFERNWPYAWGLHNADDSPVKGKVGVAPLPHFPGHKSAATLGGWHIGISKYSDNKALAWEFVKFVESYSVQKGFAMNLGWNPGRVDVYDDPAVVSKSPHLKELRAVFENAVPRPIVPYYPQLSEIIQKYVNSALAGKISPQEALDKAQKEAEELVKQYS.

The signal sequence occupies residues 1–24 (MNVKKVLLGLFLVGVLGIAVVASG). 14 residues coordinate alpha,alpha-trehalose: glutamate 57, threonine 84, arginine 89, aspartate 110, tyrosine 161, aspartate 163, tyrosine 217, glutamate 279, tryptophan 297, tyrosine 299, glycine 334, tryptophan 335, tryptophan 371, and arginine 404.

The protein belongs to the bacterial solute-binding protein 1 family. The complex is composed of two ATP-binding proteins (MalK), two transmembrane proteins (MalG and MalF) and a solute-binding protein (MalE). Glycosylated.

The protein localises to the cell membrane. In terms of biological role, part of the ABC transporter complex MalEFGK involved in trehalose/maltose import. Binds maltose and trehalose. The chain is Trehalose/maltose-binding protein MalE (malE) from Thermococcus litoralis (strain ATCC 51850 / DSM 5473 / JCM 8560 / NS-C).